Reading from the N-terminus, the 343-residue chain is Proto-oncogene serine/threonine-protein kinase mos (343 aa).

The Protein kinase domain maps to 63–339 (VCLMHRLGSG…LLQRDLKAFR (277 aa)). ATP-binding positions include 69–77 (LGSGGFGSV) and K90. The Proton acceptor role is filled by D198.

It belongs to the protein kinase superfamily. Ser/Thr protein kinase family. Interacts with MAP2K1/MEK1.

It is found in the cytoplasm. The enzyme catalyses L-seryl-[protein] + ATP = O-phospho-L-seryl-[protein] + ADP + H(+). It carries out the reaction L-threonyl-[protein] + ATP = O-phospho-L-threonyl-[protein] + ADP + H(+). Its function is as follows. Serine/threonine kinase involved in the regulation of MAPK signaling. Is an activator of the ERK1/2 signaling cascade playing an essential role in the stimulation of oocyte maturation. This is Proto-oncogene serine/threonine-protein kinase mos from Mus musculus (Mouse).